We begin with the raw amino-acid sequence, 315 residues long: Serine/threonine-protein phosphatase PP2A catalytic subunit 3 (315 aa).

Mn(2+)-binding residues include Asp62, His64, Asp90, and Asn122. Residue His123 is the Proton donor of the active site. His172 and His247 together coordinate Mn(2+). A disordered region spans residues 294–315; that stretch reads QFEPAPRENEPHTTRRVPDYFL. Residues 298 to 315 show a composition bias toward basic and acidic residues; it reads APRENEPHTTRRVPDYFL. Leu315 carries the leucine methyl ester modification.

It belongs to the PPP phosphatase family. PP-2A subfamily. Requires Mn(2+) as cofactor. Post-translationally, reversibly methyl esterified on Leu-315 by leucine carboxyl methyltransferase 1 (PPM1) and protein phosphatase methylesterase 1 (PPE1). Carboxyl methylation influences the affinity of the catalytic subunit for the different regulatory subunits, thereby modulating the PP2A holoenzyme's substrate specificity, enzyme activity and cellular localization.

The catalysed reaction is O-phospho-L-seryl-[protein] + H2O = L-seryl-[protein] + phosphate. The enzyme catalyses O-phospho-L-threonyl-[protein] + H2O = L-threonyl-[protein] + phosphate. The polypeptide is Serine/threonine-protein phosphatase PP2A catalytic subunit 3 (Ppn3) (Paramecium tetraurelia).